The chain runs to 500 residues: Carnosic acid synthase (500 aa).

Residues 4 to 24 (LILLSLAFLASCVVAYSRRRP) traverse the membrane as a helical segment. Position 443 (cysteine 443) interacts with heme.

This sequence belongs to the cytochrome P450 family. Requires heme as cofactor. In terms of tissue distribution, mostly expressed in young leaves, particularly in glandular trichomes.

The protein localises to the membrane. It carries out the reaction 11-hydroxyferruginol + 3 reduced [NADPH--hemoprotein reductase] + 3 O2 = carnosate + 3 oxidized [NADPH--hemoprotein reductase] + 4 H2O + 4 H(+). The enzyme catalyses miltiradiene + 2 reduced [NADPH--hemoprotein reductase] + 2 O2 = miltiradien-20-al + 2 oxidized [NADPH--hemoprotein reductase] + 3 H2O + 2 H(+). It catalyses the reaction ferruginol + 3 reduced [NADPH--hemoprotein reductase] + 3 O2 = pisiferate + 3 oxidized [NADPH--hemoprotein reductase] + 4 H2O + 4 H(+). It participates in secondary metabolite biosynthesis; terpenoid biosynthesis. Functionally, monooxygenase involved in the biosynthesis of carnosate, a potent antioxidant labdane-related diterpene natural product. Catalyzes the oxidation of 11-hydroxyferruginol to produce carnosate. Mediates the conversion of miltiradien into miltiradien-20-al. Also involved in the production of pisiferic acid and derivative products from ferruginol. This chain is Carnosic acid synthase, found in Salvia fruticosa (Greek sage).